A 194-amino-acid polypeptide reads, in one-letter code: Protein DROOPING LEAF (194 aa).

The segment at cysteine 15–cysteine 42 adopts a C4-type zinc-finger fold. Residues leucine 83–glutamate 103 form a disordered region.

Belongs to the YABBY family.

It is found in the nucleus. In terms of biological role, regulates carpel specification in flower development. Severe or intermediate mutation in DL causes complete or partial homeotic conversion of carpels into stamens without affecting the identities of other floral organs. Interacts antagonistically with class B genes and controls floral meristem determinacy. Regulates midrib formation in leaves probably by inducing cell proliferation in the central region of the leaf. In Oryza sativa subsp. japonica (Rice), this protein is Protein DROOPING LEAF (DL).